The following is a 189-amino-acid chain: MVRDTRNVDLERGLELCKPEKVNKQNLFTNIIKPQKDKINIKTDKIKFFLNNLFTEFSKFHDSCYPDGRISTRSKLRWPLLIIWCILIVFAIDKNFEVKDFLSIWINESFINENRFYSEIWGPIAIYICLFVLLLLGLIYCSKIVVKAIPLISIVIAAVVVIIAVAMVKILYICHWLLQNFNFGFRHKS.

A run of 3 helical transmembrane segments spans residues 78–98 (WPLL…NFEV), 120–140 (IWGP…GLIY), and 148–168 (AIPL…VAMV).

The protein belongs to the UPF0494 family.

The protein localises to the membrane. The protein is UPF0494 membrane protein C977.06 of Schizosaccharomyces pombe (strain 972 / ATCC 24843) (Fission yeast).